The chain runs to 363 residues: 3-isopropylmalate dehydrogenase (363 aa).

78–91 serves as a coordination point for NAD(+); that stretch reads GPKWENLPPESQPE. Arginine 99, arginine 109, arginine 138, and aspartate 227 together coordinate substrate. Mg(2+)-binding residues include aspartate 227, aspartate 251, and aspartate 255. 285–297 provides a ligand contact to NAD(+); that stretch reads GSAPDIAGKNIAN.

Belongs to the isocitrate and isopropylmalate dehydrogenases family. LeuB type 1 subfamily. As to quaternary structure, homodimer. The cofactor is Mg(2+). Mn(2+) serves as cofactor.

The protein resides in the cytoplasm. It catalyses the reaction (2R,3S)-3-isopropylmalate + NAD(+) = 4-methyl-2-oxopentanoate + CO2 + NADH. It participates in amino-acid biosynthesis; L-leucine biosynthesis; L-leucine from 3-methyl-2-oxobutanoate: step 3/4. Functionally, catalyzes the oxidation of 3-carboxy-2-hydroxy-4-methylpentanoate (3-isopropylmalate) to 3-carboxy-4-methyl-2-oxopentanoate. The product decarboxylates to 4-methyl-2 oxopentanoate. The sequence is that of 3-isopropylmalate dehydrogenase from Salmonella choleraesuis (strain SC-B67).